A 178-amino-acid chain; its full sequence is Actin-related protein 2/3 complex subunit 3 (178 aa).

K29 is covalently cross-linked (Glycyl lysine isopeptide (Lys-Gly) (interchain with G-Cter in ubiquitin)).

This sequence belongs to the ARPC3 family. Component of the Arp2/3 complex composed of ARP2, ARP3, ARC40/p41-ARC, ARC35/p34-ARC, ARC18/p21-ARC, ARC19/p20-ARC and ARC16/p16-ARC.

It localises to the cytoplasm. The protein resides in the cytoskeleton. Functions as a component of the Arp2/3 complex which is involved in regulation of actin polymerization and together with an activating nucleation-promoting factor (NPF) mediates the formation of branched actin networks. The polypeptide is Actin-related protein 2/3 complex subunit 3 (ARC18) (Saccharomyces cerevisiae (strain ATCC 204508 / S288c) (Baker's yeast)).